A 246-amino-acid chain; its full sequence is Transcriptional regulatory protein LytR (246 aa).

The region spanning lysine 2–arginine 116 is the Response regulatory domain. Aspartate 53 carries the 4-aspartylphosphate modification. The HTH LytTR-type domain maps to leucine 141–leucine 245.

In terms of assembly, homodimer; when phosphorylated. In terms of processing, phosphorylated and dephosphorylated by LytS.

Its subcellular location is the cytoplasm. Member of the two-component regulatory system LytR/LytS that regulates genes involved in autolysis, programmed cell death, biofilm formation and cell wall metabolism. Also participates in sensing and responding to host defense cationic antimicrobial peptides (HDPs). Upon phosphorylation by LytS, functions as a transcription regulator by direct binding to promoter regions of target genes including lrgA and lrgB, to positively regulate their expression. In Staphylococcus aureus (strain bovine RF122 / ET3-1), this protein is Transcriptional regulatory protein LytR (lytR).